A 696-amino-acid polypeptide reads, in one-letter code: MTHTISGQYGRDTIVLETGNWAKQAHGAVVYKSGNLVLLATVCAADDAKEGQDFFPLTCEYTEKLYSVGRFPGGYFKREAKPPEHEILISRIIDRPIRPLFPEGYFCEVQLQVQVLSADGDVSVAGHALNAASVALTISDIPFNGPIAGARIGRINGELILNPTTKEIVNSDLDLVVAGTKTHIVMIEGEAKELSNEEMLSALRFAQKHIAEFVTLQEEYAKQIGVVKREVKLKARDVELLAKVKEYAFAKLTAANQTPDKTVRNKEISNVNKDVVEFFKQTVEDADKIKDIKTYLHELEYEIVREQVLNQGVRFDGRRLDEIRPISVEINPLPGPHGSSVFTRGQTQSLGVVTLGTGSDNQRYETLEGQKEKSFMLHYNFPAFSVGEVRRSSGPGRREIGHGNLAERALKLVLPKSEEFPYVIRVVSEILESNGSSSMASVCSGSLALMAAGVPIKGSVSGIAMGLFSDSSGKYAVLSDIAGLEDHFGDMDCKIAGTRKGITAFQMDLKVTGVSFDVLESVFEQAQRGRFHILDIMEKHISKASDSLAGTAPRIIVRNIPKDRIGELIGPGGKNVRGISELTGAELYIEDDGRVTISGSNQESAEKAAKMVDGFFAEVEVGKIYEGKVKRIADFGAFVEILPGKEGLCHISKIDFKRVNSVKDIVKEGDIIRVKVLNVDKTGKIDLSRKDALEEI.

Residues Asp486 and Asp492 each contribute to the Mg(2+) site. The region spanning 553 to 612 is the KH domain; it reads PRIIVRNIPKDRIGELIGPGGKNVRGISELTGAELYIEDDGRVTISGSNQESAEKAAKMV. In terms of domain architecture, S1 motif spans 622–690; the sequence is GKIYEGKVKR…KTGKIDLSRK (69 aa).

This sequence belongs to the polyribonucleotide nucleotidyltransferase family. The cofactor is Mg(2+).

It localises to the cytoplasm. It carries out the reaction RNA(n+1) + phosphate = RNA(n) + a ribonucleoside 5'-diphosphate. Its function is as follows. Involved in mRNA degradation. Catalyzes the phosphorolysis of single-stranded polyribonucleotides processively in the 3'- to 5'-direction. This Leptospira borgpetersenii serovar Hardjo-bovis (strain JB197) protein is Polyribonucleotide nucleotidyltransferase.